Here is a 293-residue protein sequence, read N- to C-terminus: MAQPIGRKPEWLKIKMASGASFAATRQLLNRHSLHTVCRSALCPNLQECWSRGTATFLLLGNTCTRSCTFCAVSKASAPPAPDSDEPQKIAEAIASMKLKHAVLTSVTRDDLPDGGANHWIATMQAIRQRTPNVSLECLIPDFQHKKAALDSVMQATPDVLNHNIESVPSLYSTVRPQANYRASLELLRYAKEQHGLATKSGLMVGMGEERHEVEATLHDLAAHGCDMVTIGQYLQPSAAHLPVARYVPPQEFEEYSTIAKNAGIRYVHAAPFVRSSYHAETFPNNLTITQNL.

C38, C43, C49, C64, C68, C71, and S277 together coordinate [4Fe-4S] cluster. A Radical SAM core domain is found at 50–266 (WSRGTATFLL…STIAKNAGIR (217 aa)).

Belongs to the radical SAM superfamily. Lipoyl synthase family. The cofactor is [4Fe-4S] cluster.

Its subcellular location is the cytoplasm. The catalysed reaction is [[Fe-S] cluster scaffold protein carrying a second [4Fe-4S](2+) cluster] + N(6)-octanoyl-L-lysyl-[protein] + 2 oxidized [2Fe-2S]-[ferredoxin] + 2 S-adenosyl-L-methionine + 4 H(+) = [[Fe-S] cluster scaffold protein] + N(6)-[(R)-dihydrolipoyl]-L-lysyl-[protein] + 4 Fe(3+) + 2 hydrogen sulfide + 2 5'-deoxyadenosine + 2 L-methionine + 2 reduced [2Fe-2S]-[ferredoxin]. It functions in the pathway protein modification; protein lipoylation via endogenous pathway; protein N(6)-(lipoyl)lysine from octanoyl-[acyl-carrier-protein]: step 2/2. Catalyzes the radical-mediated insertion of two sulfur atoms into the C-6 and C-8 positions of the octanoyl moiety bound to the lipoyl domains of lipoate-dependent enzymes, thereby converting the octanoylated domains into lipoylated derivatives. The sequence is that of Lipoyl synthase from Chlorobium chlorochromatii (strain CaD3).